The following is a 145-amino-acid chain: Transcription elongation factor 1 (145 aa).

Residues cysteine 25, cysteine 28, cysteine 49, and cysteine 52 each contribute to the Zn(2+) site. At serine 55 the chain carries Phosphoserine. Positions 80–145 (VNSGRGSDTD…RGALVDSDDE (66 aa)) are disordered. Acidic residues-rich tracts occupy residues 88 to 104 (TDDGDEGSDSDYESDSE) and 113 to 126 (GEIDSDEEEVDSDE). 3 positions are modified to phosphoserine: serine 117, serine 124, and serine 142.

This sequence belongs to the ELOF1 family.

It is found in the nucleus. Functionally, transcription elongation factor implicated in the maintenance of proper chromatin structure in actively transcribed regions. The sequence is that of Transcription elongation factor 1 (ELF1) from Saccharomyces cerevisiae (strain ATCC 204508 / S288c) (Baker's yeast).